The chain runs to 139 residues: Self-incompatibility protein S1 (139 aa).

An N-terminal signal peptide occupies residues 1 to 19 (MNIFYVIVLLSFFLSKSSG). Asparagine 51 carries an N-linked (GlcNAc...) asparagine glycan.

This sequence belongs to the plant self-incompatibility (S1) protein family. Post-translationally, glycosylated (S1b) and unglocosylated (S1a) forms coexist. As to expression, accumulates in the stigma (at protein level).

Its subcellular location is the secreted. Functionally, exhibits specific pollen self-inhibitory activity thus preventing self-fertilization. The protein is Self-incompatibility protein S1 of Papaver rhoeas (Common poppy).